Consider the following 933-residue polypeptide: Probable Rho-type GTPase-activating protein 4 (933 aa).

LIM zinc-binding domains lie at 22–80 (CFCI…LCVD) and 81–129 (ICNG…CLPC). 2 disordered regions span residues 181 to 200 (PSSVLSGRMQNTSSPTNSLR) and 304 to 338 (ENGTLPQLPKNESVVNPPPLRRSSTMNYKSVSTTT). A compositionally biased stretch (polar residues) spans 325–338 (RSSTMNYKSVSTTT). S353 bears the Phosphoserine mark. 3 disordered regions span residues 415–435 (RLSSEPNGLKKRLTNSSNYEA), 605–628 (SSSFGIFNNDKKSNRTISTPSPRE), and 641–660 (GFRPKDNKDKESGGYNKRNS). The span at 619–628 (RTISTPSPRE) shows a compositional bias: polar residues. The residue at position 625 (S625) is a Phosphoserine. A compositionally biased stretch (basic and acidic residues) spans 643 to 652 (RPKDNKDKES). Phosphoserine occurs at positions 738 and 740. The Rho-GAP domain maps to 753–932 (NRLTLLRVPT…FLIDHVHEVF (180 aa)).

GTPase-activating protein for Rho-type proteins. This Schizosaccharomyces pombe (strain 972 / ATCC 24843) (Fission yeast) protein is Probable Rho-type GTPase-activating protein 4 (rga4).